The following is a 43-amino-acid chain: Hemolysin H1U (43 aa).

Methionine 1 carries the N-formylmethionine modification.

The protein belongs to the staphylococcal hemolytic protein family.

The protein resides in the secreted. Virulence factor. Causes hemolysis of erythrocytes. Acts synergistically with beta-hemolysins from S.aureus ATCC 25923. Cytotoxic towards human dermal fibroblasts. The chain is Hemolysin H1U from Staphylococcus ureilyticus (Staphylococcus cohnii subsp. urealyticus).